Here is a 216-residue protein sequence, read N- to C-terminus: uncharacterized protein (216 aa).

2 consecutive 4Fe-4S ferredoxin-type domains span residues 160-189 (DDKP…IDEK) and 188-216 (EKPK…ALLP). Positions 169, 172, 175, 179, 197, 200, 203, and 207 each coordinate [4Fe-4S] cluster.

The protein belongs to the FrhG family.

This is an uncharacterized protein from Methanocaldococcus jannaschii (strain ATCC 43067 / DSM 2661 / JAL-1 / JCM 10045 / NBRC 100440) (Methanococcus jannaschii).